We begin with the raw amino-acid sequence, 252 residues long: Chitooligosaccharide deacetylase (252 aa).

Mg(2+) is bound by residues His-61 and His-125.

Belongs to the YdjC deacetylase family. ChbG subfamily. As to quaternary structure, homodimer. It depends on Mg(2+) as a cofactor.

Its subcellular location is the cytoplasm. The enzyme catalyses N,N'-diacetylchitobiose + H2O = N-acetyl-beta-D-glucosaminyl-(1-&gt;4)-D-glucosamine + acetate. It catalyses the reaction diacetylchitobiose-6'-phosphate + H2O = N'-monoacetylchitobiose-6'-phosphate + acetate. The protein operates within glycan degradation; chitin degradation. Functionally, involved in the degradation of chitin. ChbG is essential for growth on the acetylated chitooligosaccharides chitobiose and chitotriose but is dispensable for growth on cellobiose and chitosan dimer, the deacetylated form of chitobiose. Deacetylation of chitobiose-6-P and chitotriose-6-P is necessary for both the activation of the chb promoter by the regulatory protein ChbR and the hydrolysis of phosphorylated beta-glucosides by the phospho-beta-glucosidase ChbF. Catalyzes the removal of only one acetyl group from chitobiose-6-P to yield monoacetylchitobiose-6-P, the inducer of ChbR and the substrate of ChbF. This chain is Chitooligosaccharide deacetylase, found in Klebsiella pneumoniae subsp. pneumoniae (strain ATCC 700721 / MGH 78578).